Consider the following 140-residue polypeptide: Large ribosomal subunit protein uL11 (140 aa).

Belongs to the universal ribosomal protein uL11 family. Part of the ribosomal stalk of the 50S ribosomal subunit. Interacts with L10 and the large rRNA to form the base of the stalk. L10 forms an elongated spine to which L12 dimers bind in a sequential fashion forming a multimeric L10(L12)X complex. One or more lysine residues are methylated.

In terms of biological role, forms part of the ribosomal stalk which helps the ribosome interact with GTP-bound translation factors. This Desulfovibrio desulfuricans (strain ATCC 27774 / DSM 6949 / MB) protein is Large ribosomal subunit protein uL11.